A 272-amino-acid chain; its full sequence is Regulatory protein RecX (272 aa).

The protein belongs to the RecX family.

The protein localises to the cytoplasm. In terms of biological role, modulates RecA activity. The sequence is that of Regulatory protein RecX from Staphylococcus saprophyticus subsp. saprophyticus (strain ATCC 15305 / DSM 20229 / NCIMB 8711 / NCTC 7292 / S-41).